Consider the following 289-residue polypeptide: 2-dehydro-3-deoxyphosphooctonate aldolase (289 aa).

This sequence belongs to the KdsA family.

It localises to the cytoplasm. The catalysed reaction is D-arabinose 5-phosphate + phosphoenolpyruvate + H2O = 3-deoxy-alpha-D-manno-2-octulosonate-8-phosphate + phosphate. Its pathway is carbohydrate biosynthesis; 3-deoxy-D-manno-octulosonate biosynthesis; 3-deoxy-D-manno-octulosonate from D-ribulose 5-phosphate: step 2/3. The protein operates within bacterial outer membrane biogenesis; lipopolysaccharide biosynthesis. In Cupriavidus necator (strain ATCC 17699 / DSM 428 / KCTC 22496 / NCIMB 10442 / H16 / Stanier 337) (Ralstonia eutropha), this protein is 2-dehydro-3-deoxyphosphooctonate aldolase.